The sequence spans 672 residues: Nuclear hormone receptor family member nhr-5 (672 aa).

Positions 1 to 19 (MSSGGNSSNVNRNSGSSNV) are enriched in low complexity. The tract at residues 1 to 38 (MSSGGNSSNVNRNSGSSNVITLNDSDEETEDSNLGSSS) is disordered. The nuclear receptor DNA-binding region spans 40-115 (TNLCKVCGAE…EGMNPAYVRP (76 aa)). 2 consecutive NR C4-type zinc fingers follow at residues 43–63 (CKVC…CVGC) and 79–98 (CAAN…CRSC). The region spanning 155–424 (EMRTILMTLL…PLLTDLFGCF (270 aa)) is the NR LBD domain. A disordered region spans residues 550–577 (NIQGPSHLPQCGSTVTQRPTVPSSTTSS). Over residues 562–577 (STVTQRPTVPSSTTSS) the composition is skewed to low complexity.

This sequence belongs to the nuclear hormone receptor family.

The protein resides in the nucleus. Its function is as follows. Orphan nuclear receptor. The protein is Nuclear hormone receptor family member nhr-5 (nhr-5) of Caenorhabditis elegans.